Reading from the N-terminus, the 179-residue chain is ATP synthase subunit delta (179 aa).

Belongs to the ATPase delta chain family. F-type ATPases have 2 components, F(1) - the catalytic core - and F(0) - the membrane proton channel. F(1) has five subunits: alpha(3), beta(3), gamma(1), delta(1), epsilon(1). F(0) has three main subunits: a(1), b(2) and c(10-14). The alpha and beta chains form an alternating ring which encloses part of the gamma chain. F(1) is attached to F(0) by a central stalk formed by the gamma and epsilon chains, while a peripheral stalk is formed by the delta and b chains.

The protein resides in the cell membrane. In terms of biological role, f(1)F(0) ATP synthase produces ATP from ADP in the presence of a proton or sodium gradient. F-type ATPases consist of two structural domains, F(1) containing the extramembraneous catalytic core and F(0) containing the membrane proton channel, linked together by a central stalk and a peripheral stalk. During catalysis, ATP synthesis in the catalytic domain of F(1) is coupled via a rotary mechanism of the central stalk subunits to proton translocation. Functionally, this protein is part of the stalk that links CF(0) to CF(1). It either transmits conformational changes from CF(0) to CF(1) or is implicated in proton conduction. In Staphylococcus aureus (strain USA300 / TCH1516), this protein is ATP synthase subunit delta.